A 372-amino-acid polypeptide reads, in one-letter code: tRNA 2-selenouridine synthase (372 aa).

The region spanning 17 to 140 is the Rhodanese domain; it reads FLQDIPLIDV…LRNFLLTTLE (124 aa). Residue Cys100 is the S-selanylcysteine intermediate of the active site.

Belongs to the SelU family. As to quaternary structure, monomer.

It catalyses the reaction 5-methylaminomethyl-2-thiouridine(34) in tRNA + selenophosphate + (2E)-geranyl diphosphate + H2O + H(+) = 5-methylaminomethyl-2-selenouridine(34) in tRNA + (2E)-thiogeraniol + phosphate + diphosphate. It carries out the reaction 5-methylaminomethyl-2-thiouridine(34) in tRNA + (2E)-geranyl diphosphate = 5-methylaminomethyl-S-(2E)-geranyl-thiouridine(34) in tRNA + diphosphate. The enzyme catalyses 5-methylaminomethyl-S-(2E)-geranyl-thiouridine(34) in tRNA + selenophosphate + H(+) = 5-methylaminomethyl-2-(Se-phospho)selenouridine(34) in tRNA + (2E)-thiogeraniol. The catalysed reaction is 5-methylaminomethyl-2-(Se-phospho)selenouridine(34) in tRNA + H2O = 5-methylaminomethyl-2-selenouridine(34) in tRNA + phosphate. Its function is as follows. Involved in the post-transcriptional modification of the uridine at the wobble position (U34) of tRNA(Lys), tRNA(Glu) and tRNA(Gln). Catalyzes the conversion of 2-thiouridine (S2U-RNA) to 2-selenouridine (Se2U-RNA). Acts in a two-step process involving geranylation of 2-thiouridine (S2U) to S-geranyl-2-thiouridine (geS2U) and subsequent selenation of the latter derivative to 2-selenouridine (Se2U) in the tRNA chain. The chain is tRNA 2-selenouridine synthase from Serratia proteamaculans (strain 568).